Here is a 63-residue protein sequence, read N- to C-terminus: Short neurotoxin 2 (63 aa).

Intrachain disulfides connect C3–C21, C15–C39, C43–C49, and C50–C55.

Belongs to the three-finger toxin family. Short-chain subfamily. Orphan group XVIII sub-subfamily. Expressed by the venom gland.

Its subcellular location is the secreted. Its function is as follows. Blocks both the muscle-twitch response to nerve stimulation and the response to exogenous acetylcholine. The protein is Short neurotoxin 2 of Bungarus fasciatus (Banded krait).